The chain runs to 153 residues: Bacteriohemerythrin (153 aa).

Fe cation-binding residues include histidine 21, histidine 57, glutamate 61, histidine 76, histidine 80, histidine 115, and aspartate 120.

This sequence belongs to the hemerythrin family. As to quaternary structure, monomer.

Its function is as follows. Oxygen-binding protein. May be involved in a storage mechanism or for delivery to oxygen-requiring enzymes. The oxygen-binding site contains two iron atoms. This Pseudomonas paraeruginosa (strain DSM 24068 / PA7) (Pseudomonas aeruginosa (strain PA7)) protein is Bacteriohemerythrin.